The primary structure comprises 614 residues: MSSTKKHSRSEGEEKDARLAKKVKTDETPVDGEVKKERKKDKKEKKDKKEKKDKKSKKEKKDQDESPATESTEDVSMPDAAAEPVADKKEKKEKKDKKEKKDKKEKKAKKSDESTTEESTSASKATTNGTTTPAASTNGAYTYKQADALSALPESEIETFLKEKEIVIKDPSSSNLRPIMNFSQLPQSNLISKNPFAAYTNPTPIQSASWPFSLSGRDVIGIAETGSGKTMAFSLPCVESLASRPKPKFNSRDRTAHPRAVIVSPTRELAMQTHAALSGLASLVGLSAVCIFGGSDKNEQRNLLYKNNGVDIITATPGRLKDFLSEGSISLANVSFAVLDEADRMLDRGFSEDIKLILSGCPPKEQRQTLMFTATWPLDIQKLAESYMINPAQVTIGHRTRAGGDGEGNGNIELQANSRIEQKVEVVDPRGKEFRLYELLKEAQKGSQKDDRILVFCLYKKEAVRVEQFLSRKGIKVASIHGDLRQDQRTRSLEAFKSGTTTVLVATDVAARGLDIPEVKLVINVTFPLTIEDYVHRIGRTGRAGKLGKAITLFTEHDKAHSGSLVNILRAAKQPVPEELLKFGTTVKKKAHDAYGSFYKDIDPNKKATKITFD.

The segment at 1–138 is disordered; that stretch reads MSSTKKHSRS…GTTTPAASTN (138 aa). Basic and acidic residues predominate over residues 9–36; sequence RSEGEEKDARLAKKVKTDETPVDGEVKK. 2 stretches are compositionally biased toward basic residues: residues 37–58 and 91–109; these read ERKK…KSKK and KKEK…KKAK. The segment covering 117 to 138 has biased composition (low complexity); sequence EESTSASKATTNGTTTPAASTN. The Q motif motif lies at 180-207; that stretch reads MNFSQLPQSNLISKNPFAAYTNPTPIQS. The region spanning 210–394 is the Helicase ATP-binding domain; sequence WPFSLSGRDV…ESYMINPAQV (185 aa). ATP is bound at residue 223–230; sequence AETGSGKT. The DEAD box motif lies at 340 to 343; it reads DEAD. Positions 435–584 constitute a Helicase C-terminal domain; it reads RLYELLKEAQ…PVPEELLKFG (150 aa).

The protein belongs to the DEAD box helicase family. DDX5/DBP2 subfamily.

It localises to the nucleus. It is found in the nucleolus. It catalyses the reaction ATP + H2O = ADP + phosphate + H(+). Functionally, ATP-dependent RNA helicase required for 60S ribosomal subunit synthesis. Involved in efficient pre-rRNA processing, predominantly at site A3, which is necessary for the normal formation of 25S and 5.8S rRNAs. The polypeptide is ATP-dependent RNA helicase dbp-3 (dbp-3) (Neurospora crassa (strain ATCC 24698 / 74-OR23-1A / CBS 708.71 / DSM 1257 / FGSC 987)).